A 419-amino-acid chain; its full sequence is L-rhamnose isomerase (419 aa).

Histidine 262, aspartate 294, and aspartate 296 together coordinate Mn(2+).

It belongs to the rhamnose isomerase family. In terms of assembly, homotetramer. It depends on Mn(2+) as a cofactor.

It localises to the cytoplasm. The enzyme catalyses L-rhamnopyranose = L-rhamnulose. It participates in carbohydrate degradation; L-rhamnose degradation; glycerone phosphate from L-rhamnose: step 1/3. Catalyzes the interconversion of L-rhamnose and L-rhamnulose. The chain is L-rhamnose isomerase from Klebsiella pneumoniae (strain 342).